A 92-amino-acid chain; its full sequence is DNA-directed RNA polymerase subunit omega (92 aa).

It belongs to the RNA polymerase subunit omega family. As to quaternary structure, the RNAP catalytic core consists of 2 alpha, 1 beta, 1 beta' and 1 omega subunit. When a sigma factor is associated with the core the holoenzyme is formed, which can initiate transcription.

The catalysed reaction is RNA(n) + a ribonucleoside 5'-triphosphate = RNA(n+1) + diphosphate. Functionally, promotes RNA polymerase assembly. Latches the N- and C-terminal regions of the beta' subunit thereby facilitating its interaction with the beta and alpha subunits. The chain is DNA-directed RNA polymerase subunit omega from Acinetobacter baumannii (strain AB307-0294).